Consider the following 21-residue polypeptide: Conchiolin protein p20 (21 aa).

Residues 1–14 (YQRXSRYYYYXGPP) are compositionally biased toward low complexity. Positions 1 to 21 (YQRXSRYYYYXGPPDDIDDRY) are disordered.

It belongs to the N16 matrix protein family. In terms of assembly, homooligomer; disulfide-linked. May also be disulfide-linked to insoluble organic matrix. Post-translationally, according to PubMed:11250534, amino acids 4 and 11 may be sulfated or phosphorylated. By similarity with the N14 matrix protein, amino-acid 4 may be a cysteine involved in a disulfide bond. In terms of tissue distribution, component of conchiolin, the organic matrix of nacre. Is dispersed in calcium carbonate and also linked by disulfide bonds to the organic core of nacre.

Its subcellular location is the secreted. The protein localises to the extracellular space. It is found in the extracellular matrix. In terms of biological role, may be specifically involved in the formation of the nacreous layer. The chain is Conchiolin protein p20 from Pinctada maxima (Silver-lipped pearl oyster).